A 519-amino-acid polypeptide reads, in one-letter code: NADH-quinone oxidoreductase subunit N (519 aa).

Transmembrane regions (helical) follow at residues 14-34, 44-64, 82-102, 117-137, 167-187, 209-229, 249-269, 278-298, 307-327, 359-379, 407-427, 431-451, and 487-507; these read LLPAIIMVVGASILLLSEVFL, AVLTVVTAVAAGAMALTTMFE, FLTFVVCVGLGLATLSSVSFL, LFASAGMSLLAMSNELITLFV, FILGAFSSAVLLYGAALLYGA, GLVYAGIILVITGFAFKVAAV, LMSVGVKAAAFAAMVRVFFMV, LLGLFSVLAFLTMVAGNLLAI, LAYSSIAHAGYLLVGVAALFV, ILYYLLAYTFSAVGAFAIVSV, WAFAMAAFMLSLGGIPPTIGF, LLIFQAAVDAGLIGLTIVGVL, and LALVLSTAAVVILGIIPGPIM.

It belongs to the complex I subunit 2 family. NDH-1 is composed of 14 different subunits. Subunits NuoA, H, J, K, L, M, N constitute the membrane sector of the complex.

Its subcellular location is the cell inner membrane. The enzyme catalyses a quinone + NADH + 5 H(+)(in) = a quinol + NAD(+) + 4 H(+)(out). Functionally, NDH-1 shuttles electrons from NADH, via FMN and iron-sulfur (Fe-S) centers, to quinones in the respiratory chain. The immediate electron acceptor for the enzyme in this species is believed to be ubiquinone. Couples the redox reaction to proton translocation (for every two electrons transferred, four hydrogen ions are translocated across the cytoplasmic membrane), and thus conserves the redox energy in a proton gradient. This Myxococcus xanthus (strain DK1622) protein is NADH-quinone oxidoreductase subunit N.